A 29-amino-acid chain; its full sequence is Kalata-B11 (29 aa).

Positions 1 to 29 form a cross-link, cyclopeptide (Gly-Asp); it reads GLPVCGETCFGGTCNTPGCSCTDPICTRD. Cystine bridges form between C5–C19, C9–C21, and C14–C26.

In terms of processing, this is a cyclic peptide.

Probably participates in a plant defense mechanism. In Oldenlandia affinis, this protein is Kalata-B11.